The sequence spans 350 residues: Phenylalanine--tRNA ligase alpha subunit (350 aa).

Glu262 is a binding site for Mg(2+).

The protein belongs to the class-II aminoacyl-tRNA synthetase family. Phe-tRNA synthetase alpha subunit type 1 subfamily. As to quaternary structure, tetramer of two alpha and two beta subunits. Requires Mg(2+) as cofactor.

It localises to the cytoplasm. It catalyses the reaction tRNA(Phe) + L-phenylalanine + ATP = L-phenylalanyl-tRNA(Phe) + AMP + diphosphate + H(+). The polypeptide is Phenylalanine--tRNA ligase alpha subunit (Thermus thermophilus (strain ATCC BAA-163 / DSM 7039 / HB27)).